The primary structure comprises 206 residues: Pyridoxine/pyridoxamine 5'-phosphate oxidase (206 aa).

FMN is bound by residues 55–60, 70–71, arginine 76, lysine 77, and glutamine 99; these read RVVLLK and YT. Lysine 60 is a substrate binding site. Positions 117, 121, and 125 each coordinate substrate. FMN contacts are provided by residues 134–135 and tryptophan 179; that span reads QS. Position 185-187 (185-187) interacts with substrate; that stretch reads RLH. Arginine 189 contacts FMN.

Belongs to the pyridoxamine 5'-phosphate oxidase family. As to quaternary structure, homodimer. The cofactor is FMN.

The enzyme catalyses pyridoxamine 5'-phosphate + O2 + H2O = pyridoxal 5'-phosphate + H2O2 + NH4(+). It carries out the reaction pyridoxine 5'-phosphate + O2 = pyridoxal 5'-phosphate + H2O2. It participates in cofactor metabolism; pyridoxal 5'-phosphate salvage; pyridoxal 5'-phosphate from pyridoxamine 5'-phosphate: step 1/1. Its pathway is cofactor metabolism; pyridoxal 5'-phosphate salvage; pyridoxal 5'-phosphate from pyridoxine 5'-phosphate: step 1/1. In terms of biological role, catalyzes the oxidation of either pyridoxine 5'-phosphate (PNP) or pyridoxamine 5'-phosphate (PMP) into pyridoxal 5'-phosphate (PLP). This Myxococcus xanthus (strain DK1622) protein is Pyridoxine/pyridoxamine 5'-phosphate oxidase.